A 274-amino-acid chain; its full sequence is Protein STAY-GREEN, chloroplastic (274 aa).

A chloroplast-targeting transit peptide spans 1-48 (MAAATSTMSLIPPITQQQRWHAADSLVVLASRRHDSRRRRRCRYVVPR).

This sequence belongs to the staygreen family.

The protein resides in the plastid. It localises to the chloroplast. Its function is as follows. Involved in the disassembling mechanism of the intact light-harvesting complex of photosystem II (LHCPII) in the thylakoid membranes. Required to trigger chlorophyll degradation during natural and dark-induced leaf senescence. The polypeptide is Protein STAY-GREEN, chloroplastic (SGR) (Oryza sativa subsp. indica (Rice)).